The sequence spans 148 residues: SPbeta prophage-derived uncharacterized protein YomK (148 aa).

Helical transmembrane passes span 72-92 (WGIG…LFGV) and 104-124 (NALI…RNII).

The protein resides in the cell membrane. This chain is SPbeta prophage-derived uncharacterized protein YomK (yomK), found in Bacillus subtilis (strain 168).